The following is a 100-amino-acid chain: Urease subunit gamma (100 aa).

It belongs to the urease gamma subunit family. As to quaternary structure, heterotrimer of UreA (gamma), UreB (beta) and UreC (alpha) subunits. Three heterotrimers associate to form the active enzyme.

The protein resides in the cytoplasm. The catalysed reaction is urea + 2 H2O + H(+) = hydrogencarbonate + 2 NH4(+). It functions in the pathway nitrogen metabolism; urea degradation; CO(2) and NH(3) from urea (urease route): step 1/1. The protein is Urease subunit gamma of Pseudomonas entomophila (strain L48).